The sequence spans 739 residues: Probable beta-glucosidase L (739 aa).

Positions 1 to 17 (MQNLFLSLLAAAVTVHA) are cleaved as a signal peptide. An N-linked (GlcNAc...) asparagine glycan is attached at N224. Residue D252 is part of the active site. The N-linked (GlcNAc...) asparagine glycan is linked to N398.

It belongs to the glycosyl hydrolase 3 family.

The protein resides in the secreted. It carries out the reaction Hydrolysis of terminal, non-reducing beta-D-glucosyl residues with release of beta-D-glucose.. The protein operates within glycan metabolism; cellulose degradation. Its function is as follows. Beta-glucosidases are one of a number of cellulolytic enzymes involved in the degradation of cellulosic biomass. Catalyzes the last step releasing glucose from the inhibitory cellobiose. In Neosartorya fischeri (strain ATCC 1020 / DSM 3700 / CBS 544.65 / FGSC A1164 / JCM 1740 / NRRL 181 / WB 181) (Aspergillus fischerianus), this protein is Probable beta-glucosidase L (bglL).